The following is a 208-amino-acid chain: Small ribosomal subunit protein uS4 (208 aa).

In terms of domain architecture, S4 RNA-binding spans 98–161; sequence QRLDNVVYRM…KTNPQIVRAI (64 aa).

The protein belongs to the universal ribosomal protein uS4 family. In terms of assembly, part of the 30S ribosomal subunit. Contacts protein S5. The interaction surface between S4 and S5 is involved in control of translational fidelity.

In terms of biological role, one of the primary rRNA binding proteins, it binds directly to 16S rRNA where it nucleates assembly of the body of the 30S subunit. With S5 and S12 plays an important role in translational accuracy. The protein is Small ribosomal subunit protein uS4 of Campylobacter fetus subsp. fetus (strain 82-40).